The following is a 411-amino-acid chain: Multifunctional CCA protein (411 aa).

Residues Gly-8 and Arg-11 each contribute to the ATP site. 2 residues coordinate CTP: Gly-8 and Arg-11. Mg(2+) is bound by residues Asp-21 and Asp-23. Residues Arg-91, Arg-137, and Arg-140 each contribute to the ATP site. Positions 91, 137, and 140 each coordinate CTP. Positions 228–329 (CGIHTLMVAK…VNILDQIDSW (102 aa)) constitute an HD domain.

Belongs to the tRNA nucleotidyltransferase/poly(A) polymerase family. Bacterial CCA-adding enzyme type 1 subfamily. Monomer. Can also form homodimers and oligomers. Mg(2+) is required as a cofactor. Ni(2+) serves as cofactor.

It carries out the reaction a tRNA precursor + 2 CTP + ATP = a tRNA with a 3' CCA end + 3 diphosphate. The catalysed reaction is a tRNA with a 3' CCA end + 2 CTP + ATP = a tRNA with a 3' CCACCA end + 3 diphosphate. Its function is as follows. Catalyzes the addition and repair of the essential 3'-terminal CCA sequence in tRNAs without using a nucleic acid template. Adds these three nucleotides in the order of C, C, and A to the tRNA nucleotide-73, using CTP and ATP as substrates and producing inorganic pyrophosphate. tRNA 3'-terminal CCA addition is required both for tRNA processing and repair. Also involved in tRNA surveillance by mediating tandem CCA addition to generate a CCACCA at the 3' terminus of unstable tRNAs. While stable tRNAs receive only 3'-terminal CCA, unstable tRNAs are marked with CCACCA and rapidly degraded. The polypeptide is Multifunctional CCA protein (Photobacterium profundum (strain SS9)).